Reading from the N-terminus, the 312-residue chain is Ribonuclease Z (312 aa).

Zn(2+)-binding residues include H62, H64, D66, H67, H144, D215, and H273. The Proton acceptor role is filled by D66.

Belongs to the RNase Z family. Homodimer. Zn(2+) is required as a cofactor.

The catalysed reaction is Endonucleolytic cleavage of RNA, removing extra 3' nucleotides from tRNA precursor, generating 3' termini of tRNAs. A 3'-hydroxy group is left at the tRNA terminus and a 5'-phosphoryl group is left at the trailer molecule.. Functionally, zinc phosphodiesterase, which displays some tRNA 3'-processing endonuclease activity. Probably involved in tRNA maturation, by removing a 3'-trailer from precursor tRNA. This Prochlorococcus marinus subsp. pastoris (strain CCMP1986 / NIES-2087 / MED4) protein is Ribonuclease Z.